We begin with the raw amino-acid sequence, 342 residues long: Isopentenyl-diphosphate delta-isomerase (342 aa).

Residue 12–13 participates in substrate binding; that stretch reads RK. FMN contacts are provided by residues 71-73, S101, and N129; that span reads AMT. Residue 101–103 coordinates substrate; it reads SQR. A substrate-binding site is contributed by Q163. Position 164 (E164) interacts with Mg(2+). FMN is bound by residues K195, T225, 272-274, and 293-294; these read GIR and AR.

It belongs to the IPP isomerase type 2 family. In terms of assembly, homooctamer. Dimer of tetramers. Requires FMN as cofactor. NADPH is required as a cofactor. It depends on Mg(2+) as a cofactor.

The protein localises to the cytoplasm. The enzyme catalyses isopentenyl diphosphate = dimethylallyl diphosphate. In terms of biological role, involved in the biosynthesis of isoprenoids. Catalyzes the 1,3-allylic rearrangement of the homoallylic substrate isopentenyl (IPP) to its allylic isomer, dimethylallyl diphosphate (DMAPP). The polypeptide is Isopentenyl-diphosphate delta-isomerase (Mycolicibacterium gilvum (strain PYR-GCK) (Mycobacterium gilvum (strain PYR-GCK))).